Here is a 461-residue protein sequence, read N- to C-terminus: Photosystem II CP43 reaction center protein (461 aa).

Residues Met1–Glu2 constitute a propeptide that is removed on maturation. The residue at position 3 (Thr3) is an N-acetylthreonine. Thr3 bears the Phosphothreonine mark. The next 5 helical transmembrane spans lie at Leu57–Ala81, Leu122–Asn143, Lys166–Thr188, Lys243–Ser263, and Trp279–Ala300. Glu355 is a [CaMn4O5] cluster binding site. Residues Arg435–Pro459 form a helical membrane-spanning segment.

It belongs to the PsbB/PsbC family. PsbC subfamily. PSII is composed of 1 copy each of membrane proteins PsbA, PsbB, PsbC, PsbD, PsbE, PsbF, PsbH, PsbI, PsbJ, PsbK, PsbL, PsbM, PsbT, PsbX, PsbY, PsbZ, Psb30/Ycf12, at least 3 peripheral proteins of the oxygen-evolving complex and a large number of cofactors. It forms dimeric complexes. Binds multiple chlorophylls and provides some of the ligands for the Ca-4Mn-5O cluster of the oxygen-evolving complex. It may also provide a ligand for a Cl- that is required for oxygen evolution. PSII binds additional chlorophylls, carotenoids and specific lipids. is required as a cofactor.

Its subcellular location is the plastid. The protein resides in the chloroplast thylakoid membrane. In terms of biological role, one of the components of the core complex of photosystem II (PSII). It binds chlorophyll and helps catalyze the primary light-induced photochemical processes of PSII. PSII is a light-driven water:plastoquinone oxidoreductase, using light energy to abstract electrons from H(2)O, generating O(2) and a proton gradient subsequently used for ATP formation. The chain is Photosystem II CP43 reaction center protein from Nicotiana sylvestris (Wood tobacco).